Here is a 184-residue protein sequence, read N- to C-terminus: Photosystem I assembly protein Ycf4 (184 aa).

A run of 2 helical transmembrane segments spans residues 21 to 43 (NFCW…TSSY) and 58 to 80 (IFFP…SSYL).

This sequence belongs to the Ycf4 family.

Its subcellular location is the plastid. It localises to the chloroplast thylakoid membrane. Its function is as follows. Seems to be required for the assembly of the photosystem I complex. In Calycanthus floridus var. glaucus (Eastern sweetshrub), this protein is Photosystem I assembly protein Ycf4.